Reading from the N-terminus, the 179-residue chain is Insulin-like growth factor 2 (179 aa).

The N-terminal stretch at 1 to 24 (MGITAGKSVLVLLAFLAFASCCYA) is a signal peptide. Positions 25–52 (AYRPSETLCGGELVDTLQFVCGDRGFYF) are b. 3 disulfides stabilise this stretch: cysteine 33-cysteine 71, cysteine 45-cysteine 84, and cysteine 70-cysteine 75. The segment at 53-64 (SRPSSRINRRSR) is c. Residues 65-85 (GIVEECCFRSCDLALLETYCA) form an a region. The tract at residues 86–91 (TPAKSE) is d. The propeptide at 92 to 179 (RDVSASTTVL…GGASSKASSD (88 aa)) is e peptide. A glycan (O-linked (GalNAc...) threonine) is linked at threonine 106. Serine 154 carries O-linked (GalNAc...) serine glycosylation. Residues 160-179 (ALPTQDPATHGGASSKASSD) are disordered. Threonine 163 carries O-linked (GalNAc...) threonine glycosylation.

This sequence belongs to the insulin family. As to quaternary structure, interacts with MYORG; this interaction is required for IGF2 secretion. Interacts with integrins ITGAV:ITGB3 and ITGA6:ITGB4; integrin-binding is required for IGF2 signaling. Interacts with IGFBP2. Post-translationally, proteolytically processed by PCSK4, proIGF2 is cleaved at Arg-128 and Arg-92 to generate big-IGF2 and mature IGF2.

It localises to the secreted. Its function is as follows. The insulin-like growth factors possess growth-promoting activity. Major fetal growth hormone in mammals. Plays a key role in regulating fetoplacental development. IGF2 is influenced by placental lactogen. Also involved in tissue differentiation. In adults, involved in glucose metabolism in adipose tissue, skeletal muscle and liver. Acts as a ligand for integrin which is required for IGF2 signaling. Positively regulates myogenic transcription factor MYOD1 function by facilitating the recruitment of transcriptional coactivators, thereby controlling muscle terminal differentiation. Inhibits myoblast differentiation and modulates metabolism via increasing the mitochondrial respiration rate. Preptin undergoes glucose-mediated co-secretion with insulin, and acts as a physiological amplifier of glucose-mediated insulin secretion. Exhibits osteogenic properties by increasing osteoblast mitogenic activity through phosphoactivation of MAPK1 and MAPK3. This is Insulin-like growth factor 2 from Bos taurus (Bovine).